The following is a 557-amino-acid chain: Glutamine--tRNA ligase (557 aa).

Residues 42–52 (PEPNGYLHIGH) carry the 'HIGH' region motif. ATP is bound by residues 43-45 (EPN) and 49-55 (HIGHAKS). The L-glutamine site is built by Asp75 and Tyr220. Residues Thr239 and 270–271 (RL) contribute to the ATP site. The short motif at 277 to 281 (LTSKR) is the 'KMSKS' region element.

This sequence belongs to the class-I aminoacyl-tRNA synthetase family. Monomer.

The protein resides in the cytoplasm. The catalysed reaction is tRNA(Gln) + L-glutamine + ATP = L-glutaminyl-tRNA(Gln) + AMP + diphosphate. In Haemophilus influenzae (strain ATCC 51907 / DSM 11121 / KW20 / Rd), this protein is Glutamine--tRNA ligase.